Consider the following 852-residue polypeptide: Elongation factor 2 (852 aa).

The tr-type G domain occupies 17–356 (RNIRNMSVIA…MIAFHLPSPV (340 aa)). 26 to 33 (AHVDHGKS) is a binding site for GTP. A phosphothreonine mark is found at T57 and T59. GTP-binding positions include 170-173 (NKMD) and 227-229 (SGL). H709 is modified (diphthamide).

Belongs to the TRAFAC class translation factor GTPase superfamily. Classic translation factor GTPase family. EF-G/EF-2 subfamily. Post-translationally, phosphorylation by EF-2 kinase completely inactivates EF-2. In terms of processing, AMPylated by fic-1.

It is found in the cytoplasm. It catalyses the reaction GTP + H2O = GDP + phosphate + H(+). Its function is as follows. Catalyzes the GTP-dependent ribosomal translocation step during translation elongation. During this step, the ribosome changes from the pre-translocational (PRE) to the post-translocational (POST) state as the newly formed A-site-bound peptidyl-tRNA and P-site-bound deacylated tRNA move to the P and E sites, respectively. Catalyzes the coordinated movement of the two tRNA molecules, the mRNA and conformational changes in the ribosome. Involved in the morphogenesis of epidermal tissues. This chain is Elongation factor 2 (eef-2), found in Caenorhabditis elegans.